Consider the following 196-residue polypeptide: Dephospho-CoA kinase (196 aa).

The 194-residue stretch at 3–196 (RIGLTGNIGC…KVYEELTRDP (194 aa)) folds into the DPCK domain. Residue 11 to 16 (GCGKST) participates in ATP binding.

Belongs to the CoaE family.

The protein resides in the cytoplasm. The enzyme catalyses 3'-dephospho-CoA + ATP = ADP + CoA + H(+). It functions in the pathway cofactor biosynthesis; coenzyme A biosynthesis; CoA from (R)-pantothenate: step 5/5. Catalyzes the phosphorylation of the 3'-hydroxyl group of dephosphocoenzyme A to form coenzyme A. This chain is Dephospho-CoA kinase, found in Aquifex aeolicus (strain VF5).